The primary structure comprises 365 residues: 3-dehydroquinate synthase (365 aa).

NAD(+) contacts are provided by residues 69 to 74 (DGEAHK), 103 to 107 (GVIGD), 127 to 128 (TT), lysine 140, lysine 149, and 167 to 170 (TLNT). Residues glutamate 182, histidine 245, and histidine 262 each contribute to the Zn(2+) site.

The protein belongs to the sugar phosphate cyclases superfamily. Dehydroquinate synthase family. Co(2+) is required as a cofactor. It depends on Zn(2+) as a cofactor. NAD(+) serves as cofactor.

It is found in the cytoplasm. The catalysed reaction is 7-phospho-2-dehydro-3-deoxy-D-arabino-heptonate = 3-dehydroquinate + phosphate. It participates in metabolic intermediate biosynthesis; chorismate biosynthesis; chorismate from D-erythrose 4-phosphate and phosphoenolpyruvate: step 2/7. In terms of biological role, catalyzes the conversion of 3-deoxy-D-arabino-heptulosonate 7-phosphate (DAHP) to dehydroquinate (DHQ). The polypeptide is 3-dehydroquinate synthase (Pseudomonas putida (strain W619)).